We begin with the raw amino-acid sequence, 828 residues long: Cadherin-22 (828 aa).

The N-terminal stretch at 1 to 34 (MRPRPEGRGLRAGVALSPALLLLLLLPPPPTLLG) is a signal peptide. The Extracellular portion of the chain corresponds to 36–624 (LWAAGTPSPS…AFVMAASLSP (589 aa)). 5 consecutive Cadherin domains span residues 64 to 168 (WVWN…EPRF), 169 to 277 (LHGP…PPRF), 278 to 394 (PQKM…PPEF), 395 to 498 (RPPS…NPPE), and 499 to 616 (LATP…TTAF). N-linked (GlcNAc...) asparagine glycosylation occurs at asparagine 162. N-linked (GlcNAc...) asparagine glycosylation is found at asparagine 466 and asparagine 612. A helical transmembrane segment spans residues 625-645 (GALIALLVCVLILVVLVLLIL). At 646 to 828 (TLRRHHKSHL…HRGDDEAQAS (183 aa)) the chain is on the cytoplasmic side. A compositionally biased stretch (gly residues) spans 702–719 (GGGSAGGGAGGGSGGGAG). The disordered stretch occupies residues 702 to 745 (GGGSAGGGAGGGSGGGAGSPPQAHLPSERHSLPQGPPSPEPDFS).

Its subcellular location is the cell membrane. Cadherins are calcium-dependent cell adhesion proteins. They preferentially interact with themselves in a homophilic manner in connecting cells; cadherins may thus contribute to the sorting of heterogeneous cell types. PB-cadherins may have a role in the morphological organization of pituitary gland and brain tissues. The protein is Cadherin-22 (CDH22) of Homo sapiens (Human).